The primary structure comprises 301 residues: Aldose reductase (301 aa).

11–20 (GKEIPTVGLG) lines the NADP(+) pocket. The active-site Proton donor is the tyrosine 51. Histidine 111 lines the substrate pocket. NADP(+) is bound at residue 209–266 (SSLGSAPGSSAKVRDDKTIKAIAKKYGCAPSQIILSYITAQGICVIPKSRSKEHLREN).

The protein belongs to the aldo/keto reductase family.

It localises to the cytoplasm. The enzyme catalyses an alditol + NAD(+) = an aldose + NADH + H(+). The catalysed reaction is an alditol + NADP(+) = an aldose + NADPH + H(+). In terms of biological role, catalyzes the NADPH-dependent reduction of a wide variety of carbonyl-containing compounds to their corresponding alcohols with a broad range of catalytic efficiencies. The chain is Aldose reductase from Encephalitozoon cuniculi (strain GB-M1) (Microsporidian parasite).